We begin with the raw amino-acid sequence, 931 residues long: Beta-mannosidase A (931 aa).

The N-terminal stretch at 1–21 (MRHSIGLAAALLAPTLPVALG) is a signal peptide. N-linked (GlcNAc...) asparagine glycans are attached at residues Asn40, Asn79, Asn247, Asn282, and Asn347. Glu479 serves as the catalytic Proton donor. Asn550, Asn608, Asn658, Asn738, Asn790, Asn798, Asn830, and Asn918 each carry an N-linked (GlcNAc...) asparagine glycan.

The protein belongs to the glycosyl hydrolase 2 family. Beta-mannosidase A subfamily. As to quaternary structure, homodimer. In terms of processing, N-glycosylated.

It localises to the secreted. It catalyses the reaction Hydrolysis of terminal, non-reducing beta-D-mannose residues in beta-D-mannosides.. It participates in glycan metabolism; N-glycan degradation. Functionally, exoglycosidase that cleaves the single beta-linked mannose residue from the non-reducing end of beta-mannosidic oligosaccharides of various complexity and length. Involved in the degradation of polymeric mannan and galactomannan. Releases the terminal mannose residue from mannobiose and mannotriose, as well as from galactosyl-mannobiose (GM2), galactosyl-mannotriose (GM3) and di-galactosyl-mannopentaose (G2M5). The protein is Beta-mannosidase A (mndA) of Aspergillus niger.